The following is a 203-amino-acid chain: Small ribosomal subunit protein uS4 (203 aa).

Positions 1-46 (MSKRQSAKYKLDRRMGENIWGRPKSPVNRREYGPGQHGQRRKGKMS) are disordered. The S4 RNA-binding domain occupies 94-157 (RRLDAVVYRA…QEMALVAEAQ (64 aa)).

Belongs to the universal ribosomal protein uS4 family. Part of the 30S ribosomal subunit. Contacts protein S5. The interaction surface between S4 and S5 is involved in control of translational fidelity.

One of the primary rRNA binding proteins, it binds directly to 16S rRNA where it nucleates assembly of the body of the 30S subunit. Its function is as follows. With S5 and S12 plays an important role in translational accuracy. The sequence is that of Small ribosomal subunit protein uS4 from Sphingopyxis alaskensis (strain DSM 13593 / LMG 18877 / RB2256) (Sphingomonas alaskensis).